Reading from the N-terminus, the 20-residue chain is SNDVSWHEWKRMYNKEYNGA.

This sequence belongs to the peptidase C1 family.

Its subcellular location is the lysosome. Functionally, thiol protease. This is Cathepsin L-like cysteine proteinase from Fasciola hepatica (Liver fluke).